A 346-amino-acid chain; its full sequence is T-box protein 12 (346 aa).

The segment covering 33-48 (DEEDVEVDVEDVDDVD) has biased composition (acidic residues). The tract at residues 33–66 (DEEDVEVDVEDVDDVDLSSIPSKSPERSRGRPKI) is disordered. The T-box DNA-binding region spans 86 to 268 (LWAKFFDLGT…KNPFAKGFRD (183 aa)).

Its subcellular location is the nucleus. Transcription factor. Involved in cell fate determination; required to pattern the posterior hindgut. Involved in motor neuron fate determination and maintenance, acting as a transcriptional repressor to counteract gene activation by transcription factor unc-3 in a subset of motor neurons. Required throughout development to repress transcription by unc-3, probably acting by binding to specific promoter elements. Represses expression of VA and VB motor neuron-specific effector genes, such as DEG/ENaC channel del-1 and the innexin inx-12, in DA and DB motor neurons. Represses expression of transcription factor bnc-1, perhaps acting directly, in DA and DB motor neurons. This is T-box protein 12 (mab-9) from Caenorhabditis elegans.